The sequence spans 286 residues: Protein NipSnap homolog 2 (286 aa).

Residues 1-40 (MATRVLHSSCSGLYRAAGPARGKGHATAVIRSLSASHNRP) constitute a mitochondrion transit peptide.

This sequence belongs to the NipSnap family.

It is found in the mitochondrion matrix. In terms of biological role, protein involved in mitophagy. Accumulates on the mitochondria surface in response to mitochondrial depolarization and acts as a 'eat me' signal by recruiting proteins involved in selective autophagy. This chain is Protein NipSnap homolog 2 (nipsnap2), found in Danio rerio (Zebrafish).